The primary structure comprises 314 residues: Dihydroorotate dehydrogenase (fumarate) (314 aa).

Residues Lys46, Asn70–Leu74, and Asn130 contribute to the substrate site. Lys46 to Ser47 provides a ligand contact to FMN. FMN is bound at residue Asn130. Catalysis depends on nucleophile residues Ser132 and Cys133. 2 residues coordinate FMN: Lys167 and Ile195. Asn196 to Ser197 serves as a coordination point for substrate. FMN is bound by residues Gly224, Gly252–Gly253, and Gly274–Thr275.

Belongs to the dihydroorotate dehydrogenase family. Type 1 subfamily. In terms of assembly, homodimer. Requires FMN as cofactor.

It localises to the cytoplasm. The catalysed reaction is (S)-dihydroorotate + fumarate = orotate + succinate. It participates in pyrimidine metabolism; UMP biosynthesis via de novo pathway. Functionally, catalyzes the conversion of dihydroorotate to orotate with fumarate as the electron acceptor. This chain is Dihydroorotate dehydrogenase (fumarate) (URA1), found in Saccharomyces bayanus (Yeast).